Consider the following 1097-residue polypeptide: DNA-directed RNA polymerase subunit beta (1097 aa).

The disordered stretch occupies residues 1072-1097 (QDVNPRRSTPSRPTYESLGVADYDED).

Belongs to the RNA polymerase beta chain family. In cyanobacteria the RNAP catalytic core is composed of 2 alpha, 1 beta, 1 beta', 1 gamma and 1 omega subunit. When a sigma factor is associated with the core the holoenzyme is formed, which can initiate transcription.

The catalysed reaction is RNA(n) + a ribonucleoside 5'-triphosphate = RNA(n+1) + diphosphate. DNA-dependent RNA polymerase catalyzes the transcription of DNA into RNA using the four ribonucleoside triphosphates as substrates. This Parasynechococcus marenigrum (strain WH8102) protein is DNA-directed RNA polymerase subunit beta.